We begin with the raw amino-acid sequence, 112 residues long: Class I hydrophobin 17 (112 aa).

A signal peptide spans 1–19 (MYSQSMVLLAAAFASFVAA). Intrachain disulfides connect Cys30/Cys90, Cys37/Cys84, Cys38/Cys74, and Cys91/Cys104. The N-linked (GlcNAc...) asparagine glycan is linked to Asn108.

The protein belongs to the fungal hydrophobin family. In terms of assembly, self-assembles to form functional amyloid fibrils called rodlets. Self-assembly into fibrillar rodlets occurs spontaneously at hydrophobic:hydrophilic interfaces and the rodlets further associate laterally to form amphipathic monolayers.

It localises to the secreted. The protein localises to the cell wall. Aerial growth, conidiation, and dispersal of filamentous fungi in the environment rely upon a capability of their secreting small amphipathic proteins called hydrophobins (HPBs) with low sequence identity. Class I can self-assemble into an outermost layer of rodlet bundles on aerial cell surfaces, conferring cellular hydrophobicity that supports fungal growth, development and dispersal; whereas Class II form highly ordered films at water-air interfaces through intermolecular interactions but contribute nothing to the rodlet structure. Hydph17 is a class I hydrophobin involved in mycelial growth. This is Class I hydrophobin 17 from Pleurotus ostreatus (strain PC15) (Oyster mushroom).